Consider the following 148-residue polypeptide: U5-hexatoxin-Hi1a (148 aa).

Residues 1–21 form the signal peptide; the sequence is MNFSVVAVALVVVLTVHFTDG. Residues 22 to 38 constitute a propeptide that is removed on maturation; that stretch reads QETSSSLPSPPSPLPGR. A disordered region spans residues 125–148; the sequence is TPSTTVTTPTPTTETPTTETPSTP.

In terms of processing, contains 2 disulfide bonds. As to expression, expressed by the venom gland.

The protein resides in the secreted. Probable ion channel inhibitor. The chain is U5-hexatoxin-Hi1a from Hadronyche infensa (Fraser island funnel-web spider).